A 521-amino-acid chain; its full sequence is Cell cycle checkpoint protein hpr-9 (521 aa).

3 disordered regions span residues 1 to 20 (MQAI…TRER), 318 to 375 (QHEE…NRFV), and 492 to 521 (GTET…YESR). Composition is skewed to polar residues over residues 355–370 (ESLS…SLPS) and 493–504 (TETTSKMRMSQQ).

It belongs to the rad9 family. Putative component of the toroidal 9-1-1 (RAD9-RAD1-HUS1) complex, composed of hpr-9, mrt-2 and hus-1.

Functionally, may be a component of the 9-1-1 cell-cycle checkpoint response complex that plays a major role in DNA repair. This Caenorhabditis elegans protein is Cell cycle checkpoint protein hpr-9.